A 677-amino-acid chain; its full sequence is Nuclear fusion protein FUS2 (677 aa).

At threonine 20 the chain carries Phosphothreonine. A phosphoserine mark is found at serine 67, serine 72, and serine 84. Threonine 88 carries the phosphothreonine modification. 2 positions are modified to phosphoserine: serine 100 and serine 106. Residues 112-326 (KFYKIVQEFY…KYSLFSNKLE (215 aa)) enclose the DH domain.

It localises to the cell tip. Its function is as follows. Promotes cell fusion during zygote formation. This chain is Nuclear fusion protein FUS2 (FUS2), found in Saccharomyces cerevisiae (strain ATCC 204508 / S288c) (Baker's yeast).